The primary structure comprises 444 residues: Pentatricopeptide repeat-containing protein At4g35850, mitochondrial (444 aa).

The transit peptide at 1–25 (MKFLMQSISGRNRSLVRALVSRRYF) directs the protein to the mitochondrion. PPR repeat units follow at residues 40–74 (DLSEYNTAVNSVTAQRRHYLLRDVYDDMKLDGVQP), 75–109 (TADIFHSFVVGTMKGARLSDAFFFREEMKAMGIAP), 110–144 (DVNLYNFLISTCGKCKNGKEAIRVYDEMKRYDVKP), 145–179 (NGQTFVCLLNACAVSGQLDLVYAIVRDMTAAGVGL), 255–289 (NLTVYHVAFSALADLKDVKATEALLEMLKKDGKDT), and 290–325 (DTYCMLQIMRCYLHSQDFENGLKLFQDYMSADKIPA).

The protein belongs to the PPR family. P subfamily.

Its subcellular location is the mitochondrion. This is Pentatricopeptide repeat-containing protein At4g35850, mitochondrial from Arabidopsis thaliana (Mouse-ear cress).